A 46-amino-acid chain; its full sequence is Large ribosomal subunit protein bL34 (46 aa).

Residues 1–17 (MTKRTLRGSVRKKKRTS) show a composition bias toward basic residues. Residues 1–26 (MTKRTLRGSVRKKKRTSGFRARMETP) are disordered.

The protein belongs to the bacterial ribosomal protein bL34 family.

In Pseudanabaena sp. (strain PCC 6903), this protein is Large ribosomal subunit protein bL34 (rpmH).